A 250-amino-acid polypeptide reads, in one-letter code: Kv channel-interacting protein 4 (250 aa).

The tract at residues Asn-2–Ser-44 is KIS. Phosphoserine is present on residues Ser-17 and Ser-56. The 57-residue stretch at Leu-61–Pro-117 folds into the EF-hand 1; degenerate domain. EF-hand domains follow at residues Asp-120–Gly-155, Thr-156–Met-191, and Ala-204–Ile-239. The Ca(2+) site is built by Asp-133, Asp-135, Asn-137, Asp-144, Asp-169, Asn-171, Asp-173, Tyr-175, Glu-180, Asp-217, Asn-219, Asp-221, and Glu-228. Residues Glu-237–Ile-250 form an interaction with KCND2 region.

It belongs to the recoverin family. Component of heteromultimeric potassium channels. Identified in potassium channel complexes containing KCND1, KCND2, KCND3, KCNIP1, KCNIP2, KCNIP3, KCNIP4, DPP6 and DPP10. Interacts with the C-terminus of PSEN2 and probably PSEN1. Interacts with KCND2 and KCND3. In terms of tissue distribution, expressed in brain. Highly expressed by neurons in layers II-IV of cortex and in hippocampus, thalamus and the Purkinje cell layer of the cerebellum.

It is found in the cell membrane. The protein resides in the cytoplasm. Its subcellular location is the peroxisome. Its function is as follows. Regulatory subunit of Kv4/D (Shal)-type voltage-gated rapidly inactivating A-type potassium channels, such as KCND2/Kv4.2 and KCND3/Kv4.3. Modulates channel expression at the cell membrane, gating characteristics, inactivation kinetics and rate of recovery from inactivation in a calcium-dependent and isoform-specific manner. This chain is Kv channel-interacting protein 4 (Kcnip4), found in Mus musculus (Mouse).